A 627-amino-acid chain; its full sequence is E3 ubiquitin-protein ligase DTX1 (627 aa).

2 consecutive WWE domains span residues 14–94 and 95–171; these read GLGF…PVRR and NFYD…RLRR. Disordered regions lie at residues 222 to 254, 269 to 327, and 368 to 398; these read QRRK…ALVV, PATG…ALPV, and PPVS…KSKN. Pro residues-rich tracts occupy residues 230–248 and 275–287; these read PAAP…PGGP and EPAP…PRSP. The SH3-binding motif lies at 240 to 243; sequence PPPL. Residues 296-314 show a composition bias toward polar residues; that stretch reads PGQNNLSRPGPQRSTSVSA. Residues 386 to 396 are compositionally biased toward basic residues; that stretch reads RKTKKKHLKKS. The RING-type zinc-finger motif lies at 418–479; that stretch reads CTICMERLVT…DGSLQCPTCK (62 aa).

The protein belongs to the Deltex family. Homodimer. May form a heterodimer with other members of the Deltex family. Interacts with NOTCH1 via its N-terminal region and EIF3F, the interaction is required for NOTCH1 deubiquitination. Interacts with EP300. Forms a heterodimer with BBAP; the heterodimerization leading to an increase of in vitro ubiquitin ligase activity. Interacts with ITCH. Ubiquitinated; undergoes 'Lys-29'-linked polyubiquitination catalyzed by ITCH. In terms of tissue distribution, predominantly expressed in the brain and testis. Weakly expressed in the thymus, spleen and ovary. Predominantly expressed in regions containing post-mitotic differentiating neurons.

The protein resides in the cytoplasm. The protein localises to the nucleus. It catalyses the reaction S-ubiquitinyl-[E2 ubiquitin-conjugating enzyme]-L-cysteine + [acceptor protein]-L-lysine = [E2 ubiquitin-conjugating enzyme]-L-cysteine + N(6)-ubiquitinyl-[acceptor protein]-L-lysine.. It functions in the pathway protein modification; protein ubiquitination. In terms of biological role, regulator of Notch signaling, a signaling pathway involved in cell-cell communications that regulates a broad spectrum of cell-fate determinations. Mainly acts as a positive regulator of Notch, but it also acts as a negative regulator, depending on the developmental and cell context. Mediates the antineural activity of Notch, possibly by inhibiting the transcriptional activation mediated by MATCH1. Involved in neurogenesis, lymphogenesis and myogenesis, and may also be involved in MZB (Marginal zone B) cell differentiation. Promotes B-cell development at the expense of T-cell development, suggesting that it can antagonize NOTCH1. Functions as an ubiquitin ligase protein in vivo, mediating ubiquitination and promoting degradation of MEKK1, suggesting that it may regulate the Notch pathway via some ubiquitin ligase activity. This chain is E3 ubiquitin-protein ligase DTX1 (Dtx1), found in Mus musculus (Mouse).